The sequence spans 2998 residues: Probable polyketide synthase 14 (2998 aa).

Positions 19-456 (EDDIAIIGIG…GSNCCLILSE (438 aa)) constitute a Ketosynthase family 3 (KS3) domain. Active-site for beta-ketoacyl synthase activity residues include Cys-189, His-331, and His-376. Residues 657–690 (GIEASFIVGHSLGEIPAAYCSGMITLDTLCYLIY) are acyl/malonyl transferase. Ser-667 (for acyl/malonyl transferase activity) is an active-site residue. The N-terminal hotdog fold stretch occupies residues 962–1084 (IDQLGFSLIE…GNFQLFTSGN (123 aa)). The PKS/mFAS DH domain occupies 962–1249 (IDQLGFSLIE…CKSLTIIKDS (288 aa)). His-996 (proton acceptor; for dehydratase activity) is an active-site residue. The interval 1101 to 1249 (NLTKLTKNEL…CKSLTIIKDS (149 aa)) is C-terminal hotdog fold. The active-site Proton donor; for dehydratase activity is Asp-1159. A helical membrane pass occupies residues 1979 to 1999 (SILIHSGSGGIGLSALNILKW). Residues 2476–2553 (ENDTSIDSLF…SSIKLITNQL (78 aa)) form the Carrier domain. O-(pantetheine 4'-phosphoryl)serine is present on Ser-2513. The interval 2559–2578 (DGQQQQHRQNKKNNNIPENK) is disordered. The span at 2561-2573 (QQQQHRQNKKNNN) shows a compositional bias: low complexity. Residues 2621 to 2641 (IFLTGSTGFLGAYLLWYLIQM) traverse the membrane as a helical segment.

It depends on pantetheine 4'-phosphate as a cofactor.

It is found in the membrane. Its function is as follows. Probable polyketide synthase. This is Probable polyketide synthase 14 (pks14) from Dictyostelium discoideum (Social amoeba).